The chain runs to 395 residues: Chaperone protein DnaJ (395 aa).

One can recognise a J domain in the interval Asp-5–Gly-70. The CR-type zinc-finger motif lies at Gly-145–Thr-223. Cys-158, Cys-161, Cys-175, Cys-178, Cys-197, Cys-200, Cys-211, and Cys-214 together coordinate Zn(2+). 4 CXXCXGXG motif repeats span residues Cys-158–Gly-165, Cys-175–Gly-182, Cys-197–Gly-204, and Cys-211–Gly-218.

This sequence belongs to the DnaJ family. In terms of assembly, homodimer. Requires Zn(2+) as cofactor.

Its subcellular location is the cytoplasm. Its function is as follows. Participates actively in the response to hyperosmotic and heat shock by preventing the aggregation of stress-denatured proteins and by disaggregating proteins, also in an autonomous, DnaK-independent fashion. Unfolded proteins bind initially to DnaJ; upon interaction with the DnaJ-bound protein, DnaK hydrolyzes its bound ATP, resulting in the formation of a stable complex. GrpE releases ADP from DnaK; ATP binding to DnaK triggers the release of the substrate protein, thus completing the reaction cycle. Several rounds of ATP-dependent interactions between DnaJ, DnaK and GrpE are required for fully efficient folding. Also involved, together with DnaK and GrpE, in the DNA replication of plasmids through activation of initiation proteins. The polypeptide is Chaperone protein DnaJ (Maricaulis maris (strain MCS10) (Caulobacter maris)).